Consider the following 421-residue polypeptide: Core-capsid bridging protein (421 aa).

The protein belongs to the adenoviridae core-capsid bridging protein family. As to quaternary structure, monomer. Homodimer. Exists in equilibrium between monomers and dimers in solution. Interacts with the histone-like nucleoprotein; this interactions bridge the virus core to the capsid. Interacts with core protein X; this interactions bridge the virus core to the capsid. Interacts with the endosome lysis protein VI; this interactions bridge the virus core to the capsid. Interacts with the peripentonal hexons. Interacts with host NPM1; this interaction might play a role in virus assembly.

Its subcellular location is the virion. It is found in the host nucleus. The protein resides in the host nucleolus. In terms of biological role, associates loosely with the viral DNA to form an outer shell around the nucleoprotein-DNA complex and links it with the capsid by binding the endosome lysis protein. Dissociates from the viral genome during entry. Might be involved in nuclear capsid assembly of the viral particles through its association with NPM1/nucleophosmin. The sequence is that of Core-capsid bridging protein from Canine adenovirus serotype 1 (strain RI261) (CAdV-1).